The primary structure comprises 210 residues: MNRKLIQNLAETLCRQVKHFNKTETECLIRLFNSLLGEQAERKTTIGVDRAKFRNILHHTFGMTDDMMTDRVCRVIDKDNDGYLSVKEWVEALSVFLRGTLDEKMKYCFEVYDLNGDGYISREEMFQMLKDSLIRQPTEEDPDEGIKDIVEIALKKMDYDHDGRVSYADFEKTVMDENLLLEAFGNCLPDAKSVLAFEQQAFQKHEHCKE.

EF-hand domains follow at residues 64-99 (TDDM…FLRG), 100-135 (TLDE…SLIR), and 145-180 (GIKD…ENLL). The Ca(2+) site is built by Asp77, Asp79, Asp81, Tyr83, Glu88, Asp113, Asn115, Asp117, Tyr119, Glu124, Asp158, Asp160, Asp162, Arg164, and Asp169.

In terms of assembly, component of the outer dynein arm-docking complex along with ODAD1, ODAD2, ODAD3 and ODAD4.

The protein resides in the cytoplasm. It is found in the cytoskeleton. The protein localises to the cilium axoneme. It localises to the cell projection. Its subcellular location is the cilium. The protein resides in the flagellum. Component of the outer dynein arm-docking complex (ODA-DC) that mediates outer dynein arms (ODA) binding onto the doublet microtubule. Seems to regulate the assembly of both ODAs and their axonemal docking complex onto ciliary microtubules. Regulates ciliary and flagellar motility and is required for cilia-driven determination of body laterality. In terms of biological role, regulates ciliary motility and is required for cilia-driven determination of body laterality. This Danio rerio (Zebrafish) protein is Calaxin (clxn).